Here is a 226-residue protein sequence, read N- to C-terminus: Imidazoleglycerol-phosphate dehydratase (226 aa).

The disordered stretch occupies residues 23–55 (LTGGPIERPQPSLFASEKGANTAGPDDASQTTA).

It belongs to the imidazoleglycerol-phosphate dehydratase family.

It catalyses the reaction D-erythro-1-(imidazol-4-yl)glycerol 3-phosphate = 3-(imidazol-4-yl)-2-oxopropyl phosphate + H2O. It participates in amino-acid biosynthesis; L-histidine biosynthesis; L-histidine from 5-phospho-alpha-D-ribose 1-diphosphate: step 6/9. The polypeptide is Imidazoleglycerol-phosphate dehydratase (HIS3) (Maudiozyma humilis (Sour dough yeast)).